We begin with the raw amino-acid sequence, 1135 residues long: MALFPRGILIALVLSFVLNLGLVTKIHAKDTLDSIIDILSGLTCETQGVGDLMRTEFSHTCIVAPFFTFAVMNLVSPVLYMNTFLKLKINDSDLFNDSNFGNFPGGQCTRENRIDPKNPELHFALCSNAKLIVSRAKSVTESALAIAKAVLTWSDPWDDIKQAWENKKKEYHIPYRGKPGDDGFAFDVGFPVIYWKVIQDRDRICVSTKGFTGDVPVGCKYMKEPFPKSIYNSFIDVEDKNFIKDSTNDTPSDPLALVSCSAAGDGCYQKAYNASKTAIVMTSPLIECIRQMIARLLISKDVCSFDNVDQVVNLASRQDSALFQFQVGMHKIVTAFLTLYVMFFGFKLLLAGKVPPKSEYINFILKIIFVTYFSIGININPSNGSQYDRLDGMIQWVFPFLLNGISGLANWVMNAAPSGLCKFNNISYDKSVSYIALWDALDCRVAHYLGLDILSTLLVENSYRSHDFLNFDFFSFSAPPYIYLIIPAIISGNMMLVSLALSYPLLVISVAAFMVNATIMCMISIVILGILAPLFVPMFLFAYTRNYFDSWVKLMISFLLQPMVVVTFMITMFAVYDYGFYGKCQYKSKLIHNSIEDKMQGGIKSKRDVLIFYINNDWDDTSQYPDKDSVESCKNSLGYMLNNPINTAFNFAKDNISEIVNSKPGETTTDEFLSKFQFLSGVVLGPGMFFMSPKVLFEKIKNIFLALITACFTLYLMYNFSSQLAEFAADMTEGVALNNVAIKPQAIFKAAMAALANAGTATKGIDQIASRGGGGGARDLIGAKGLVSDNIASSGGAVGDNIASSGGAVGDNIAVSGAASTPTVTTTTASSSIANSMTKTIGDDVRSDIVTPHASTTAVPQHSSINTTIPTSVSPNIKSTSLKEIIRDNQENEKEIDNTTRAQEKIKSSSKVSGLIDYSFNLKEHDNPTGIKQIRENAEIRDKRVEVEKAWNELVASGGGRIRDQQSEETSEQRTNAEKKWNEFVDSGVVTEIREIDNSVNNKLADKLDKSEKSKIEENKNIENNIKVYNTNTLPQEKVNNTDKSSGLIDYSFNLKEHDNPTGVKQIRENAEIRDKRVKVEKAWNELVASGGGRVKEQAGGKITERRANAEKVWDDLVKSGVVKEKKDNSSNENS.

An N-terminal signal peptide occupies residues 1–28 (MALFPRGILIALVLSFVLNLGLVTKIHA). 7 helical membrane-spanning segments follow: residues 332–352 (IVTA…LLAG), 359–379 (EYIN…GINI), 393–413 (MIQW…NWVM), 495–515 (MLVS…AFMV), 522–542 (MISI…FLFA), 555–575 (MISF…MFAV), and 700–720 (IKNI…MYNF).

This sequence belongs to the TrbL/VirB6 family.

It localises to the cell membrane. This is an uncharacterized protein from Rickettsia typhi (strain ATCC VR-144 / Wilmington).